Reading from the N-terminus, the 202-residue chain is Ribonuclease HII (202 aa).

Residues 18 to 202 form the RNase H type-2 domain; sequence TYICGVDEAG…FAPVAKLLKQ (185 aa). A divalent metal cation contacts are provided by Asp24, Glu25, and Asp116.

Belongs to the RNase HII family. The cofactor is Mn(2+). Mg(2+) is required as a cofactor.

It is found in the cytoplasm. The catalysed reaction is Endonucleolytic cleavage to 5'-phosphomonoester.. Functionally, endonuclease that specifically degrades the RNA of RNA-DNA hybrids. This Acholeplasma laidlawii (strain PG-8A) protein is Ribonuclease HII.